A 258-amino-acid chain; its full sequence is Imidazole glycerol phosphate synthase subunit HisF (258 aa).

Residues D11 and D130 contribute to the active site.

This sequence belongs to the HisA/HisF family. As to quaternary structure, heterodimer of HisH and HisF.

The protein resides in the cytoplasm. It catalyses the reaction 5-[(5-phospho-1-deoxy-D-ribulos-1-ylimino)methylamino]-1-(5-phospho-beta-D-ribosyl)imidazole-4-carboxamide + L-glutamine = D-erythro-1-(imidazol-4-yl)glycerol 3-phosphate + 5-amino-1-(5-phospho-beta-D-ribosyl)imidazole-4-carboxamide + L-glutamate + H(+). The protein operates within amino-acid biosynthesis; L-histidine biosynthesis; L-histidine from 5-phospho-alpha-D-ribose 1-diphosphate: step 5/9. Functionally, IGPS catalyzes the conversion of PRFAR and glutamine to IGP, AICAR and glutamate. The HisF subunit catalyzes the cyclization activity that produces IGP and AICAR from PRFAR using the ammonia provided by the HisH subunit. This Escherichia coli O17:K52:H18 (strain UMN026 / ExPEC) protein is Imidazole glycerol phosphate synthase subunit HisF.